Reading from the N-terminus, the 236-residue chain is Phosphoribosylaminoimidazole-succinocarboxamide synthase (236 aa).

Belongs to the SAICAR synthetase family.

It catalyses the reaction 5-amino-1-(5-phospho-D-ribosyl)imidazole-4-carboxylate + L-aspartate + ATP = (2S)-2-[5-amino-1-(5-phospho-beta-D-ribosyl)imidazole-4-carboxamido]succinate + ADP + phosphate + 2 H(+). The protein operates within purine metabolism; IMP biosynthesis via de novo pathway; 5-amino-1-(5-phospho-D-ribosyl)imidazole-4-carboxamide from 5-amino-1-(5-phospho-D-ribosyl)imidazole-4-carboxylate: step 1/2. In Rickettsia prowazekii (strain Madrid E), this protein is Phosphoribosylaminoimidazole-succinocarboxamide synthase (purC).